A 233-amino-acid polypeptide reads, in one-letter code: 7-cyano-7-deazaguanine synthase (233 aa).

7-17 (LSGGLDSAVTS) is an ATP binding site. Zn(2+) is bound by residues C195, C206, C209, and C212.

The protein belongs to the QueC family. Zn(2+) is required as a cofactor.

The catalysed reaction is 7-carboxy-7-deazaguanine + NH4(+) + ATP = 7-cyano-7-deazaguanine + ADP + phosphate + H2O + H(+). It functions in the pathway purine metabolism; 7-cyano-7-deazaguanine biosynthesis. Its function is as follows. Catalyzes the ATP-dependent conversion of 7-carboxy-7-deazaguanine (CDG) to 7-cyano-7-deazaguanine (preQ(0)). This Methanococcus maripaludis (strain DSM 14266 / JCM 13030 / NBRC 101832 / S2 / LL) protein is 7-cyano-7-deazaguanine synthase.